Reading from the N-terminus, the 475-residue chain is tRNA-2-methylthio-N(6)-dimethylallyladenosine synthase (475 aa).

Residues 2–119 form the MTTase N-terminal domain; the sequence is AKLHITTWGC…LPEMINQIRS (118 aa). Residues Cys11, Cys48, Cys82, Cys156, Cys160, and Cys163 each contribute to the [4Fe-4S] cluster site. The Radical SAM core domain occupies 142-374; sequence KAEGPTAFVS…QQRINHQAMQ (233 aa). In terms of domain architecture, TRAM spans 377 to 440; sequence RLMLGTEQRI…SNSLRGEVIR (64 aa).

It belongs to the methylthiotransferase family. MiaB subfamily. As to quaternary structure, monomer. [4Fe-4S] cluster serves as cofactor.

It localises to the cytoplasm. The enzyme catalyses N(6)-dimethylallyladenosine(37) in tRNA + (sulfur carrier)-SH + AH2 + 2 S-adenosyl-L-methionine = 2-methylsulfanyl-N(6)-dimethylallyladenosine(37) in tRNA + (sulfur carrier)-H + 5'-deoxyadenosine + L-methionine + A + S-adenosyl-L-homocysteine + 2 H(+). In terms of biological role, catalyzes the methylthiolation of N6-(dimethylallyl)adenosine (i(6)A), leading to the formation of 2-methylthio-N6-(dimethylallyl)adenosine (ms(2)i(6)A) at position 37 in tRNAs that read codons beginning with uridine. This is tRNA-2-methylthio-N(6)-dimethylallyladenosine synthase from Haemophilus ducreyi (strain 35000HP / ATCC 700724).